The primary structure comprises 1060 residues: DNA-directed RNA polymerase subunit beta (1060 aa).

Belongs to the RNA polymerase beta chain family. In plastids the minimal PEP RNA polymerase catalytic core is composed of four subunits: alpha, beta, beta', and beta''. When a (nuclear-encoded) sigma factor is associated with the core the holoenzyme is formed, which can initiate transcription.

It is found in the plastid. Its subcellular location is the chloroplast. The enzyme catalyses RNA(n) + a ribonucleoside 5'-triphosphate = RNA(n+1) + diphosphate. In terms of biological role, DNA-dependent RNA polymerase catalyzes the transcription of DNA into RNA using the four ribonucleoside triphosphates as substrates. The polypeptide is DNA-directed RNA polymerase subunit beta (Helianthus annuus (Common sunflower)).